A 474-amino-acid polypeptide reads, in one-letter code: 3-isopropylmalate dehydratase large subunit (474 aa).

3 residues coordinate [4Fe-4S] cluster: C355, C415, and C418.

The protein belongs to the aconitase/IPM isomerase family. LeuC type 1 subfamily. As to quaternary structure, heterodimer of LeuC and LeuD. [4Fe-4S] cluster is required as a cofactor.

It carries out the reaction (2R,3S)-3-isopropylmalate = (2S)-2-isopropylmalate. It functions in the pathway amino-acid biosynthesis; L-leucine biosynthesis; L-leucine from 3-methyl-2-oxobutanoate: step 2/4. Catalyzes the isomerization between 2-isopropylmalate and 3-isopropylmalate, via the formation of 2-isopropylmaleate. The protein is 3-isopropylmalate dehydratase large subunit of Shewanella sp. (strain MR-4).